Here is a 629-residue protein sequence, read N- to C-terminus: Bifunctional protein ArgHA (629 aa).

The argininosuccinate lyase stretch occupies residues 1–499 (MALWGGRFSQ…NLPRSRSDLV (499 aa)). Residues 464–598 (ISIRAARLTD…EKVLKDCDMC (135 aa)) enclose the N-acetyltransferase domain. An amino-acid acetyltransferase region spans residues 500–629 (KAVGTFAVTE…INLKAEKLAS (130 aa)).

In the N-terminal section; belongs to the lyase 1 family. Argininosuccinate lyase subfamily. It in the C-terminal section; belongs to the acetyltransferase family. ArgA subfamily.

The protein resides in the cytoplasm. The catalysed reaction is 2-(N(omega)-L-arginino)succinate = fumarate + L-arginine. It catalyses the reaction L-glutamate + acetyl-CoA = N-acetyl-L-glutamate + CoA + H(+). The protein operates within amino-acid biosynthesis; L-arginine biosynthesis; N(2)-acetyl-L-ornithine from L-glutamate: step 1/4. It functions in the pathway amino-acid biosynthesis; L-arginine biosynthesis; L-arginine from L-ornithine and carbamoyl phosphate: step 3/3. This is Bifunctional protein ArgHA (argHA) from Moritella abyssi.